The chain runs to 716 residues: Dynein axonemal intermediate chain 7 (716 aa).

Belongs to the DNAI7 family. In terms of assembly, part of the multisubunit axonemal dynein complex formed at least of two heavy chains and a number of intermediate and light chains. Interacts with tubulin. Associates with microtubule. Ubiquitinated. Ubiquitination leads to its degradation through the 26S proteasome. Ubiquitin-proteasome-mediated DNAI7 degradation occurs in mitosis.

The protein resides in the cell projection. Its subcellular location is the cilium. It is found in the cytoplasm. Functionally, via its association with the multisubunit axonemal dynein complex, is potentially involved in the regulation of cilia function. May also act as a cell cycle regulator. The sequence is that of Dynein axonemal intermediate chain 7 from Homo sapiens (Human).